The primary structure comprises 260 residues: Universal stress protein PHOS34 (260 aa).

The transit peptide at 1–33 (MNPDSDYPHLPNIKIHHPSSPRHSHHHSSSTPS) directs the protein to the chloroplast. Positions 1-42 (MNPDSDYPHLPNIKIHHPSSPRHSHHHSSSTPSAATPTPTAG) are disordered. The segment covering 14–28 (KIHHPSSPRHSHHHS) has biased composition (basic residues). P18 lines the ATP pocket. S20 bears the Phosphoserine; by MAPK3 and MAPK6 mark. Over residues 29–41 (SSTPSAATPTPTA) the composition is skewed to low complexity. V80 is an ATP binding site. The tract at residues 92-118 (GPLPLQTPPPPSAATDPGAQPKPSQED) is disordered. Residues 170–179 (GSRGFGAEKR) and 187–189 (SVS) each bind ATP. A disordered region spans residues 209–260 (RDGPAPPGNVGATREAIVTVKSRRDDDDDDDEDHEAKIAAAASDHHEHIKDE). A Phosphoserine modification is found at S230. Residues 251–260 (SDHHEHIKDE) show a composition bias toward basic and acidic residues.

This sequence belongs to the universal stress protein A family. In terms of processing, phosphorylated by MAPK3 and MAPK6 after pathogenic elicitation (e.g. bacterial flg22, Phytophthora infestans zoospores and xylanase).

It localises to the plastid. It is found in the chloroplast. This is Universal stress protein PHOS34 from Arabidopsis thaliana (Mouse-ear cress).